Here is a 243-residue protein sequence, read N- to C-terminus: UPF0758 protein sll0766 (243 aa).

Residues 113–235 (VVDSPEAAAI…HQSLRQCTDL (123 aa)) form the MPN domain. Zn(2+) is bound by residues His-184, His-186, and Asp-197. Residues 184–197 (HNHPSGGLEPSPED) carry the JAMM motif motif.

The protein belongs to the UPF0758 family.

The sequence is that of UPF0758 protein sll0766 from Synechocystis sp. (strain ATCC 27184 / PCC 6803 / Kazusa).